The chain runs to 539 residues: Tyrosinase (539 aa).

The Cu cation site is built by His63, His84, His93, His290, His294, and His333. A cross-link (2'-(S-cysteinyl)-histidine (Cys-His)) is located at residues 82–84 (CHH).

The protein belongs to the tyrosinase family. Homotetramer. It depends on Cu(2+) as a cofactor. In terms of processing, the N-terminus is blocked.

The catalysed reaction is 2 L-dopa + O2 = 2 L-dopaquinone + 2 H2O. It carries out the reaction L-tyrosine + O2 = L-dopaquinone + H2O. Activated by acidifying treatment at pH 3.0. In terms of biological role, this is a copper-containing oxidase that functions in the formation of pigments such as melanins and other polyphenolic compounds. The sequence is that of Tyrosinase (melO) from Aspergillus oryzae (strain ATCC 42149 / RIB 40) (Yellow koji mold).